A 538-amino-acid chain; its full sequence is RNA-binding protein RO60 (538 aa).

Position 1 is an N-acetylmethionine (Met1). A phosphoserine mark is found at Ser4 and Ser19. Positions 16-369 (IANSQDGYVW…TFKTVEPTGK (354 aa)) constitute a TROVE domain. Residues 120–284 (RIPTHLFTFI…EMPLTALLRN (165 aa)) form an RNA-binding region. An N6-acetyllysine mark is found at Lys224 and Lys359. A VWFA-like domain region spans residues 361 to 538 (FKTVEPTGKR…VIRNFTLDMI (178 aa)). The a divalent metal cation site is built by Ser378, Ser380, and Thr445.

Belongs to the Ro 60 kDa family. Identified in a IGF2BP1-dependent mRNP granule complex containing untranslated mRNAs. Found in a complex with PUF60 and Y5 RNA. Interacts with RAB11FIP5.

The protein localises to the cytoplasm. RNA-binding protein that binds to misfolded non-coding RNAs, pre-5S rRNA, and several small cytoplasmic RNA molecules known as Y RNAs. Binds to endogenous Alu retroelements which are induced by type I interferon and stimulate porinflammatory cytokine secretion. Regulates the expression of Alu retroelements as well as inflammatory genes. May play roles in cilia formation and/or maintenance. This is RNA-binding protein RO60 from Homo sapiens (Human).